We begin with the raw amino-acid sequence, 314 residues long: Ribosomal RNA small subunit methyltransferase H (314 aa).

S-adenosyl-L-methionine contacts are provided by residues 36 to 38 (GGH), Asp-56, Phe-83, Asp-104, and Gln-111.

Belongs to the methyltransferase superfamily. RsmH family.

The protein localises to the cytoplasm. It catalyses the reaction cytidine(1402) in 16S rRNA + S-adenosyl-L-methionine = N(4)-methylcytidine(1402) in 16S rRNA + S-adenosyl-L-homocysteine + H(+). In terms of biological role, specifically methylates the N4 position of cytidine in position 1402 (C1402) of 16S rRNA. This chain is Ribosomal RNA small subunit methyltransferase H, found in Syntrophotalea carbinolica (strain DSM 2380 / NBRC 103641 / GraBd1) (Pelobacter carbinolicus).